Reading from the N-terminus, the 471-residue chain is GTPase Der (471 aa).

EngA-type G domains lie at 5–168 (PVIA…TDLE) and 186–359 (IRVA…DSAF). GTP contacts are provided by residues 11-18 (GRPNVGKS), 58-62 (DTGGI), 120-123 (NKTD), 192-199 (GRPNVGKS), 239-243 (DTAGV), and 304-307 (NKWD). The region spanning 360–444 (IKIGTNELTR…PIRLEFKSGT (85 aa)) is the KH-like domain.

The protein belongs to the TRAFAC class TrmE-Era-EngA-EngB-Septin-like GTPase superfamily. EngA (Der) GTPase family. Associates with the 50S ribosomal subunit.

In terms of biological role, GTPase that plays an essential role in the late steps of ribosome biogenesis. The sequence is that of GTPase Der from Alcanivorax borkumensis (strain ATCC 700651 / DSM 11573 / NCIMB 13689 / SK2).